A 385-amino-acid polypeptide reads, in one-letter code: Branched-chain-amino-acid aminotransferase, cytosolic (385 aa).

N6-(pyridoxal phosphate)lysine is present on K221.

This sequence belongs to the class-IV pyridoxal-phosphate-dependent aminotransferase family. Homodimer. Pyridoxal 5'-phosphate serves as cofactor. In terms of tissue distribution, expressed in muscles.

The protein localises to the cytoplasm. It catalyses the reaction L-leucine + 2-oxoglutarate = 4-methyl-2-oxopentanoate + L-glutamate. It carries out the reaction L-isoleucine + 2-oxoglutarate = (S)-3-methyl-2-oxopentanoate + L-glutamate. The enzyme catalyses L-valine + 2-oxoglutarate = 3-methyl-2-oxobutanoate + L-glutamate. In terms of biological role, catalyzes the first reaction in the catabolism of the essential branched chain amino acids leucine, isoleucine, and valine. This chain is Branched-chain-amino-acid aminotransferase, cytosolic (BCAT1), found in Ovis aries (Sheep).